Reading from the N-terminus, the 505-residue chain is MTEKTTKSKNSIATKNIVRVSLICFLLVFSVTVPFVFSPVSNASGQTTTLVDGFEDGTLSPWQTFQSFSVNTNNPYKGDYSAVANSDDNTIFVTTNNDQYTAATVAVNIKDSNNNARILFQDRPDSNNADLLANIYIESGNVGFYGGNGQDTGIDISYSEWVVFEIKNIDYSNQKYDIEVYDKSGNSLGSFSGADFYDSVSSMNGVDIYKVDSGSRVDHFTTGEFVSKSTVSGNVTDLEGNPMANATVTADSVSTTTDDNGSYSIKLADGTYDITANKKNYKPQTKQIEVNGSAKTVDFSLGKIEKQLSIEGPNFVRPNQTIPYKVEYTNETGTYDVSNYSNITSANTTLLSIDETNKTLLAGGQNATVKVTAKYNTTEVTTNVTKQYYVSYLKLENIDTVPPAKWMQAFLGFDDGYAENKNMKGIGSDIQWLLFTVIIMSTIAKLFDNPWAGIGSGVITGVLLWVLEYIGLGLLLSMVFFGIFIGLILVRVRRDGGNEVTINES.

Hydrophobic stretches follow at residues 20 to 40, 423 to 443, and 470 to 490; these read VSLI…FSPV, MKGI…MSTI, and IGLG…LILV.

The protein localises to the virion. This is Structural protein 27 from His1 virus (isolate Australia/Victoria) (His1V).